A 294-amino-acid chain; its full sequence is Glycine N-acyltransferase-like protein 2 (294 aa).

Residue K19 is modified to N6-acetyllysine.

This sequence belongs to the glycine N-acyltransferase family. Post-translationally, acetylation at Lys-19 drastically decreases the production of N-oleoyl and N-arachidonoyl glycines. Expressed at highest levels in salivary gland and trachea. Also detected in thyroid gland, spinal cord, prostate, lung and fetal brain.

Its subcellular location is the endoplasmic reticulum. It catalyses the reaction an acyl-CoA + glycine = an N-acylglycine + CoA + H(+). The enzyme catalyses (9Z)-hexadecenoyl-CoA + glycine = N-(9Z-hexadecenoyl)-glycine + CoA + H(+). The catalysed reaction is octadecanoyl-CoA + glycine = N-octadecanoylglycine + CoA + H(+). It carries out the reaction (5Z,8Z,11Z,14Z)-eicosatetraenoyl-CoA + glycine = N-(5Z,8Z,11Z,14Z)-eicosatetraenoyl-glycine + CoA + H(+). It catalyses the reaction (9Z)-octadecenoyl-CoA + glycine = N-(9Z-octadecenoyl)glycine + CoA + H(+). The enzyme catalyses octanoyl-CoA + glycine = N-octanoylglycine + CoA + H(+). The catalysed reaction is decanoyl-CoA + glycine = N-decanoylglycine + CoA + H(+). It carries out the reaction tetradecanoyl-CoA + glycine = N-tetradecanoylglycine + CoA + H(+). It catalyses the reaction dodecanoyl-CoA + glycine = N-dodecanoylglycine + CoA + H(+). The enzyme catalyses (9Z,12Z)-octadecadienoyl-CoA + glycine = N-(9Z,12Z-octadecadienoyl)-glycine + CoA + H(+). The catalysed reaction is a fatty acyl-CoA + glycine = an N-(fatty acyl)-glycine + CoA + H(+). Mitochondrial acyltransferase which transfers the acyl group to the N-terminus of glycine. Conjugates numerous substrates, such as arachidonoyl-CoA and saturated medium and long-chain acyl-CoAs ranging from chain-length C8:0-CoA to C18:0-CoA, to form a variety of N-acylglycines. Shows a preference for monounsaturated fatty acid oleoyl-CoA (C18:1-CoA) as an acyl donor. Does not exhibit any activity toward C22:6-CoA and chenodeoxycholoyl-CoA, nor toward serine or alanine. The chain is Glycine N-acyltransferase-like protein 2 from Homo sapiens (Human).